Reading from the N-terminus, the 207-residue chain is Ribosomal RNA large subunit methyltransferase E (207 aa).

Positions 61, 63, 81, 97, and 122 each coordinate S-adenosyl-L-methionine. K162 functions as the Proton acceptor in the catalytic mechanism.

It belongs to the class I-like SAM-binding methyltransferase superfamily. RNA methyltransferase RlmE family.

It is found in the cytoplasm. It catalyses the reaction uridine(2552) in 23S rRNA + S-adenosyl-L-methionine = 2'-O-methyluridine(2552) in 23S rRNA + S-adenosyl-L-homocysteine + H(+). Its function is as follows. Specifically methylates the uridine in position 2552 of 23S rRNA at the 2'-O position of the ribose in the fully assembled 50S ribosomal subunit. In Pseudomonas putida (strain ATCC 700007 / DSM 6899 / JCM 31910 / BCRC 17059 / LMG 24140 / F1), this protein is Ribosomal RNA large subunit methyltransferase E.